The chain runs to 369 residues: Capsid protein (369 aa).

The protein localises to the host nucleus. It is found in the virion. Functionally, self-assembles to form the virion icosahedral capsid. The polypeptide is Capsid protein (Avon-Heathcote Estuary associated kieseladnavirus (AHEaBV)).